A 352-amino-acid chain; its full sequence is Phosphate acyltransferase (352 aa).

The segment covering 328–339 has biased composition (basic and acidic residues); it reads ESFPGDAREREG. The disordered stretch occupies residues 328-352; the sequence is ESFPGDAREREGAPAPDAGTERVAS.

Belongs to the PlsX family. Homodimer. Probably interacts with PlsY.

The protein localises to the cytoplasm. It catalyses the reaction a fatty acyl-[ACP] + phosphate = an acyl phosphate + holo-[ACP]. It functions in the pathway lipid metabolism; phospholipid metabolism. Functionally, catalyzes the reversible formation of acyl-phosphate (acyl-PO(4)) from acyl-[acyl-carrier-protein] (acyl-ACP). This enzyme utilizes acyl-ACP as fatty acyl donor, but not acyl-CoA. The polypeptide is Phosphate acyltransferase (Citrifermentans bemidjiense (strain ATCC BAA-1014 / DSM 16622 / JCM 12645 / Bem) (Geobacter bemidjiensis)).